We begin with the raw amino-acid sequence, 257 residues long: S-methyl-5'-thioadenosine phosphorylase (257 aa).

Residues Ser10, 50-51 (RH), and 83-84 (TA) contribute to the phosphate site. Met180 serves as a coordination point for substrate. Thr181 lines the phosphate pocket. 204–206 (DYD) lines the substrate pocket.

The protein belongs to the PNP/MTAP phosphorylase family. MTAP subfamily. As to quaternary structure, homohexamer. Dimer of a homotrimer.

It carries out the reaction S-methyl-5'-thioadenosine + phosphate = 5-(methylsulfanyl)-alpha-D-ribose 1-phosphate + adenine. The catalysed reaction is adenosine + phosphate = alpha-D-ribose 1-phosphate + adenine. The protein operates within amino-acid biosynthesis; L-methionine biosynthesis via salvage pathway; S-methyl-5-thio-alpha-D-ribose 1-phosphate from S-methyl-5'-thioadenosine (phosphorylase route): step 1/1. In terms of biological role, catalyzes the reversible phosphorylation of S-methyl-5'-thioadenosine (MTA) to adenine and 5-methylthioribose-1-phosphate. Involved in the breakdown of MTA, a major by-product of polyamine biosynthesis. Responsible for the first step in the methionine salvage pathway after MTA has been generated from S-adenosylmethionine. Has broad substrate specificity with 6-aminopurine nucleosides as preferred substrates. Can also use adenosine as substrate to form ribose 1-phosphate. This chain is S-methyl-5'-thioadenosine phosphorylase, found in Thermococcus kodakarensis (strain ATCC BAA-918 / JCM 12380 / KOD1) (Pyrococcus kodakaraensis (strain KOD1)).